The chain runs to 428 residues: C4-dicarboxylate transport protein (428 aa).

9 consecutive transmembrane segments (helical) span residues 4-24, 44-64, 76-96, 142-162, 184-204, 222-242, 289-309, 326-346, and 352-372; these read SLFK…ILLG, LIKM…IAGM, VALL…LIIV, IGAF…MFGF, VIFG…FGAM, LIVC…GSIA, VVGL…SIYL, IFHQ…AAGV, and IVLA…LALI.

This sequence belongs to the dicarboxylate/amino acid:cation symporter (DAACS) (TC 2.A.23) family.

The protein localises to the cell inner membrane. Its function is as follows. Responsible for the transport of dicarboxylates such as succinate, fumarate, and malate from the periplasm across the membrane. The protein is C4-dicarboxylate transport protein of Citrobacter koseri (strain ATCC BAA-895 / CDC 4225-83 / SGSC4696).